A 612-amino-acid polypeptide reads, in one-letter code: DEAD-box ATP-dependent RNA helicase 11 (612 aa).

Disordered regions lie at residues 1-70 and 83-104; these read MSAS…SGGG and GAGGGGGGGGGWNNRSGGWDRR. Ser2 carries the N-acetylserine modification. 2 stretches are compositionally biased toward gly residues: residues 61–70 and 83–94; these read SGGGGASGGG and GAGGGGGGGGGW. The Q motif motif lies at 151-179; that stretch reads NTFADIDLGDALNLNIRRCKYVRPTPVQR. A Helicase ATP-binding domain is found at 182–366; sequence IPILLAERDL…ADFMSNYIFL (185 aa). 195–202 provides a ligand contact to ATP; the sequence is AQTGSGKT. A DEAD box motif is present at residues 310 to 313; that stretch reads DEAD. The 166-residue stretch at 377–542 folds into the Helicase C-terminal domain; that stretch reads LITQRVEFVQ…EVPEWLTRYA (166 aa). The segment at 547–583 is disordered; that stretch reads FGGGKKRSGGRFGGRDFRREGSYSRGGGGGGGGGGSD. Residues 559 to 568 are compositionally biased toward basic and acidic residues; the sequence is GGRDFRREGS. Over residues 570-583 the composition is skewed to gly residues; that stretch reads SRGGGGGGGGGGSD.

Belongs to the DEAD box helicase family. DDX3/DED1 subfamily.

The enzyme catalyses ATP + H2O = ADP + phosphate + H(+). This Arabidopsis thaliana (Mouse-ear cress) protein is DEAD-box ATP-dependent RNA helicase 11 (RH11).